The chain runs to 76 residues: Probable insulin-like peptide alpha-type 1 (76 aa).

Residues 1–24 form the signal peptide; the sequence is MKTYSFFVLFIVFIFFISSSKSHS. Intrachain disulfides connect cysteine 32-cysteine 60, cysteine 44-cysteine 73, and cysteine 48-cysteine 74.

Belongs to the insulin family.

It localises to the secreted. The protein is Probable insulin-like peptide alpha-type 1 (ins-21) of Caenorhabditis elegans.